We begin with the raw amino-acid sequence, 446 residues long: Glycogen synthase (446 aa).

Residue R15 participates in ADP-alpha-D-glucose binding.

It belongs to the glycosyltransferase 1 family. Bacterial/plant glycogen synthase subfamily.

It carries out the reaction [(1-&gt;4)-alpha-D-glucosyl](n) + ADP-alpha-D-glucose = [(1-&gt;4)-alpha-D-glucosyl](n+1) + ADP + H(+). It functions in the pathway glycan biosynthesis; glycogen biosynthesis. Its function is as follows. Synthesizes alpha-1,4-glucan chains using ADP-glucose. The sequence is that of Glycogen synthase from Deinococcus deserti (strain DSM 17065 / CIP 109153 / LMG 22923 / VCD115).